The following is a 376-amino-acid chain: Immunoglobulin G-binding protein H (376 aa).

The N-terminal stretch at 1–41 (MTRQQTKKNYSLRKLKTGTASVAVALTVLGAGFANQTTVKA) is a signal peptide. Residues 69 to 271 (TSLENEKLKS…AAKKELEANH (203 aa)) are disordered. Composition is skewed to basic and acidic residues over residues 72–146 (ENEK…KRYQ), 156–203 (ETEK…DKQI), 211–245 (LSRDLEASRAAKKELEANHQKLEAEHQKLKEDKQI), and 253–271 (LSRDLEASRAAKKELEANH). C repeat units lie at residues 153–187 (QQLETEKQISEASRKSLSRDLEASRAAKKDLEAEH), 195–229 (QKLKEDKQISDASRQGLSRDLEASRAAKKELEANH), and 237–271 (QKLKEDKQISDASRQGLSRDLEASRAAKKELEANH). D repeat units follow at residues 272–277 (QKLEAE), 278–283 (AKALKE), 286–291 (AKQAEE), and 293–298 (AKLRAG). A disordered region spans residues 292-348 (LAKLRAGKASDSQTPDTKPGNKAVPGKGQAPQAGTKPNQNKAPMKETKRQLPSTGET). Residues 342-346 (LPSTG) carry the LPXTG sorting signal motif. T345 bears the Pentaglycyl murein peptidoglycan amidated threonine mark. Residues 346–376 (GETANPFFTAAALTVMATAGVAAVVKRKEEN) constitute a propeptide, removed by sortase.

This sequence belongs to the M protein family.

Its subcellular location is the secreted. The protein localises to the cell wall. This is Immunoglobulin G-binding protein H from Streptococcus pyogenes serotype M1.